Here is a 63-residue protein sequence, read N- to C-terminus: Prokaryotic ubiquitin-like protein Pup 1 (63 aa).

Basic and acidic residues-rich tracts occupy residues 1 to 12 and 24 to 33; these read MSQEKVQRHGGG and GQERREKLGE. The interval 1–35 is disordered; sequence MSQEKVQRHGGGDGEEESGPEAAGQERREKLGEDV. The ARC ATPase binding stretch occupies residues 20–57; it reads PEAAGQERREKLGEDVDAILDEIDDVLEENAEDFVRAY. A coiled-coil region spans residues 25–51; that stretch reads QERREKLGEDVDAILDEIDDVLEENAE. At Gln63 the chain carries Deamidated glutamine. Gln63 is covalently cross-linked (Isoglutamyl lysine isopeptide (Gln-Lys) (interchain with K-? in acceptor proteins)).

The protein belongs to the prokaryotic ubiquitin-like protein family. In terms of assembly, strongly interacts with the proteasome-associated ATPase ARC through a hydrophobic interface; the interacting region of Pup lies in its C-terminal half. There is one Pup binding site per ARC hexamer ring. Post-translationally, is modified by deamidation of its C-terminal glutamine to glutamate by the deamidase Dop, a prerequisite to the subsequent pupylation process.

It functions in the pathway protein degradation; proteasomal Pup-dependent pathway. Protein modifier that is covalently attached to lysine residues of substrate proteins, thereby targeting them for proteasomal degradation. The tagging system is termed pupylation. The polypeptide is Prokaryotic ubiquitin-like protein Pup 1 (Saccharopolyspora erythraea (strain ATCC 11635 / DSM 40517 / JCM 4748 / NBRC 13426 / NCIMB 8594 / NRRL 2338)).